Reading from the N-terminus, the 346-residue chain is Short-wave-sensitive opsin 1 (346 aa).

Residues 1–31 (MSGEDEFYLFQNISSVGPWDGPQYHIAPVWA) lie on the Extracellular side of the membrane. Asn-12 carries N-linked (GlcNAc...) asparagine glycosylation. Residues 32–56 (FHLQAAFMGFVFFAGTPLNATVLVA) traverse the membrane as a helical segment. Residues 57-68 (TLHYKKLRQPLN) lie on the Cytoplasmic side of the membrane. Residues 69 to 94 (YILVNVSLGGFLFCIFSVFTVFIASC) traverse the membrane as a helical segment. Over 95–108 (HGYFLFGRHVCALE) the chain is Extracellular. The cysteines at positions 105 and 182 are disulfide-linked. A helical membrane pass occupies residues 109–128 (AFLGSVAGLVTGWSLAFLAF). Topologically, residues 129–147 (ERYLVICKPFGNIRFNSKH) are cytoplasmic. Residues 148-171 (ALTVVLITWTIGIGVSIPPFFGWS) traverse the membrane as a helical segment. Topologically, residues 172–197 (RFIPEGLQCSCGPDWYTVGTKYRSEH) are extracellular. The helical transmembrane segment at 198–225 (YTWFLFIFCFIIPLSLICFSYFQLLRTL) threads the bilayer. Residues 226-247 (RAVAAQQQESATTQKAEREVSH) are Cytoplasmic-facing. A helical membrane pass occupies residues 248–271 (MVVVMVGSFCLCYVPYAALAMYMV). Over 272–279 (NNRNHGLY) the chain is Extracellular. A helical membrane pass occupies residues 280–304 (LRLVTIPAFFSKSSCVYNPIIYCFM). Lys-291 carries the post-translational modification N6-(retinylidene)lysine. Residues 305 to 346 (NKQFRACILEMVCRKPMTDESDMSGSQKTEVSTVSSSKVGPH) are Cytoplasmic-facing. Residues 322–346 (TDESDMSGSQKTEVSTVSSSKVGPH) form a disordered region. Positions 330 to 346 (SQKTEVSTVSSSKVGPH) are enriched in low complexity.

It belongs to the G-protein coupled receptor 1 family. Opsin subfamily. Post-translationally, phosphorylated on some or all of the serine and threonine residues present in the C-terminal region. In terms of tissue distribution, expressed in cone photoreceptor cells.

It localises to the cell membrane. It is found in the photoreceptor inner segment. Its subcellular location is the cell projection. The protein localises to the cilium. The protein resides in the photoreceptor outer segment. It localises to the cytoplasm. It is found in the perinuclear region. In terms of biological role, visual pigments are the light-absorbing molecules that mediate vision. They consist of an apoprotein, opsin, covalently linked to cis-retinal. Required for the maintenance of cone outer segment organization in the ventral retina, but not essential for the maintenance of functioning cone photoreceptors. Involved in ensuring correct abundance and localization of retinal membrane proteins. May increase spectral sensitivity in dim light. This Rattus norvegicus (Rat) protein is Short-wave-sensitive opsin 1 (Opn1sw).